The chain runs to 310 residues: Oxygen-dependent coproporphyrinogen-III oxidase (310 aa).

Serine 92 is a substrate binding site. Positions 96 and 106 each coordinate a divalent metal cation. The active-site Proton donor is the histidine 106. 108–110 (NVR) serves as a coordination point for substrate. Positions 145 and 175 each coordinate a divalent metal cation. The interval 240–275 (YVEFNLIWDRGTLFGLQSGGRTESILMSMPPLARWE) is important for dimerization. 258-260 (GGR) contributes to the substrate binding site.

The protein belongs to the aerobic coproporphyrinogen-III oxidase family. In terms of assembly, homodimer. A divalent metal cation serves as cofactor.

It localises to the cytoplasm. It carries out the reaction coproporphyrinogen III + O2 + 2 H(+) = protoporphyrinogen IX + 2 CO2 + 2 H2O. It functions in the pathway porphyrin-containing compound metabolism; protoporphyrin-IX biosynthesis; protoporphyrinogen-IX from coproporphyrinogen-III (O2 route): step 1/1. Its function is as follows. Involved in the heme biosynthesis. Catalyzes the aerobic oxidative decarboxylation of propionate groups of rings A and B of coproporphyrinogen-III to yield the vinyl groups in protoporphyrinogen-IX. The polypeptide is Oxygen-dependent coproporphyrinogen-III oxidase (Pectobacterium carotovorum subsp. carotovorum (strain PC1)).